The primary structure comprises 338 residues: N-acetylmuramate/N-acetylglucosamine kinase (338 aa).

It belongs to the kinase AmgK family.

It catalyses the reaction N-acetyl-D-muramate + ATP = N-acetyl-alpha-D-muramate 1-phosphate + ADP + H(+). It carries out the reaction N-acetyl-D-glucosamine + ATP = N-acetyl-alpha-D-glucosamine 1-phosphate + ADP + H(+). It participates in cell wall biogenesis; peptidoglycan recycling. Functionally, sugar kinase that catalyzes the ATP-dependent phosphorylation of N-acetylmuramate (MurNAc) and N-acetylglucosamine (GlcNAc) at its C1 hydroxyl group, leading to MurNAc alpha-1P and GlcNAc alpha-1P, respectively. Is involved in peptidoglycan recycling as part of a cell wall recycling pathway that bypasses de novo biosynthesis of the peptidoglycan precursor UDP-MurNAc. Plays a role in intrinsic resistance to fosfomycin, which targets the de novo synthesis of UDP-MurNAc. This Pseudomonas aeruginosa (strain ATCC 15692 / DSM 22644 / CIP 104116 / JCM 14847 / LMG 12228 / 1C / PRS 101 / PAO1) protein is N-acetylmuramate/N-acetylglucosamine kinase.